Consider the following 469-residue polypeptide: Glutamine synthetase (469 aa).

A GS beta-grasp domain is found at 14–98 (NDVKYVDLRF…VVCDVLEPTT (85 aa)). One can recognise a GS catalytic domain in the interval 106–469 (PRGIAKKAMA…PVEFEMYYSV (364 aa)). The Mg(2+) site is built by glutamate 131 and glutamate 133. Glutamate 209 is a binding site for ATP. Glutamate 214 and glutamate 221 together coordinate Mg(2+). L-glutamate-binding positions include 265–266 (NG) and glycine 266. Histidine 270 provides a ligand contact to Mg(2+). Residues 272–274 (HQS) and serine 274 contribute to the ATP site. Positions 322, 328, and 340 each coordinate L-glutamate. Residues arginine 340, arginine 345, and lysine 353 each contribute to the ATP site. A Mg(2+)-binding site is contributed by glutamate 358. Arginine 360 provides a ligand contact to L-glutamate. Residue tyrosine 398 is modified to O-AMP-tyrosine.

It belongs to the glutamine synthetase family. Oligomer of 12 subunits arranged in the form of two hexameric ring. Mg(2+) serves as cofactor.

It localises to the cytoplasm. The enzyme catalyses L-glutamate + NH4(+) + ATP = L-glutamine + ADP + phosphate + H(+). Its activity is regulated as follows. The activity of this enzyme could be controlled by adenylation under conditions of abundant glutamine. Catalyzes the ATP-dependent biosynthesis of glutamine from glutamate and ammonia. The protein is Glutamine synthetase of Azorhizobium caulinodans (strain ATCC 43989 / DSM 5975 / JCM 20966 / LMG 6465 / NBRC 14845 / NCIMB 13405 / ORS 571).